The chain runs to 217 residues: Urease accessory protein UreG (217 aa).

Glycine 13–threonine 20 contacts GTP.

Belongs to the SIMIBI class G3E GTPase family. UreG subfamily. Homodimer. UreD, UreF and UreG form a complex that acts as a GTP-hydrolysis-dependent molecular chaperone, activating the urease apoprotein by helping to assemble the nickel containing metallocenter of UreC. The UreE protein probably delivers the nickel.

The protein resides in the cytoplasm. Its function is as follows. Facilitates the functional incorporation of the urease nickel metallocenter. This process requires GTP hydrolysis, probably effectuated by UreG. The chain is Urease accessory protein UreG from Frankia alni (strain DSM 45986 / CECT 9034 / ACN14a).